The sequence spans 313 residues: Alpha-S1-casein (313 aa).

The first 15 residues, 1 to 15 (MKLLILTCLVAAAFA), serve as a signal peptide directing secretion. The segment covering 77–96 (ASEEQAMASAQEDSSISSSS) has biased composition (low complexity). The tract at residues 77–111 (ASEEQAMASAQEDSSISSSSEESEEAIPNITEQKN) is disordered. A phosphoserine mark is found at Ser-90, Ser-91, Ser-93, Ser-94, Ser-95, and Ser-96. 15 tandem repeats follow at residues 135–140 (LLQKAS), 141–146 (LAKQAS), 147–152 (LFQQPS), 153–158 (LVQQAS), 159–164 (LFQQPS), 165–170 (LLQQAS), 171–176 (LFQQPS), 177–182 (MAQQAS), 183–188 (LLQQLL), 189–194 (LAQQPS), 195–200 (LALQVS), 201–206 (PAQQSS), 207–212 (LVQQAF), 213–218 (LAQQAS), and 219–224 (LAQKHH). The segment at 135 to 224 (LLQKASLAKQ…QQASLAQKHH (90 aa)) is 15 X 6 AA tandem repeats.

This sequence belongs to the alpha-casein family. As to expression, mammary gland specific. Secreted in milk.

The protein resides in the secreted. Its function is as follows. Important role in the capacity of milk to transport calcium phosphate. This is Alpha-S1-casein (Csn1s1) from Mus musculus (Mouse).